We begin with the raw amino-acid sequence, 178 residues long: Chorion class high-cysteine HCB protein 13 (178 aa).

An N-terminal signal peptide occupies residues 1–21 (MAAKLILFVCAIALVAQSVLG). Residues 22 to 46 (TGCGCCCRGCGCGCGGCGSRCCDRF) form a left arm region. Residues 47-110 (CLCSNSAAPT…GDGCVGITQS (64 aa)) form a central domain region. Residues 111–178 (CGGCGCGCGG…GCGCGGCGCC (68 aa)) form a right arm (Gly-rich tandem repeats) region.

This sequence belongs to the chorion protein family.

Its function is as follows. This protein is one of many from the eggshell of the silk moth. The sequence is that of Chorion class high-cysteine HCB protein 13 from Bombyx mori (Silk moth).